Reading from the N-terminus, the 374-residue chain is Lipid-A-disaccharide synthase (374 aa).

Belongs to the LpxB family.

The catalysed reaction is a lipid X + a UDP-2-N,3-O-bis[(3R)-3-hydroxyacyl]-alpha-D-glucosamine = a lipid A disaccharide + UDP + H(+). It functions in the pathway bacterial outer membrane biogenesis; LPS lipid A biosynthesis. Condensation of UDP-2,3-diacylglucosamine and 2,3-diacylglucosamine-1-phosphate to form lipid A disaccharide, a precursor of lipid A, a phosphorylated glycolipid that anchors the lipopolysaccharide to the outer membrane of the cell. This is Lipid-A-disaccharide synthase from Pseudomonas fluorescens (strain ATCC BAA-477 / NRRL B-23932 / Pf-5).